Here is a 915-residue protein sequence, read N- to C-terminus: Translation initiation factor IF-2 (915 aa).

Disordered regions lie at residues 1 to 105 (MSEG…RALT) and 121 to 295 (VEAA…RAAI). The span at 57-81 (PGTPSAPEGGSSSAPAPQSGNAPQG) shows a compositional bias: low complexity. Residues 84–101 (RSGGGNRGSGRGGAGGAG) are compositionally biased toward gly residues. 2 stretches are compositionally biased toward basic and acidic residues: residues 121–135 (VEAA…EQEK) and 143–180 (EEAR…RKAA). The segment covering 186 to 195 (AEAPPVPPPA) has biased composition (pro residues). Low complexity-rich tracts occupy residues 201–213 (AAPS…SRTA) and 230–239 (KVPVAAPSAP). Over residues 243–256 (RLRERGDEGEEERK) the composition is skewed to basic and acidic residues. The segment covering 266–278 (PAPRKAAAPVAKK) has biased composition (low complexity). Residues 279-295 (AVAEPRRGGRIDVRAAI) are compositionally biased toward basic and acidic residues. The tr-type G domain occupies 414-584 (PRPPVVTVMG…LLQAEVLDLK (171 aa)). The interval 423 to 430 (GHVDHGKT) is G1. Residue 423–430 (GHVDHGKT) participates in GTP binding. The segment at 448–452 (GITQH) is G2. Positions 470–473 (DTPG) are G3. GTP is bound by residues 470 to 474 (DTPGH) and 524 to 527 (NKCD). Residues 524-527 (NKCD) form a G4 region. The G5 stretch occupies residues 560-562 (SAL).

It belongs to the TRAFAC class translation factor GTPase superfamily. Classic translation factor GTPase family. IF-2 subfamily.

The protein localises to the cytoplasm. One of the essential components for the initiation of protein synthesis. Protects formylmethionyl-tRNA from spontaneous hydrolysis and promotes its binding to the 30S ribosomal subunits. Also involved in the hydrolysis of GTP during the formation of the 70S ribosomal complex. The sequence is that of Translation initiation factor IF-2 from Granulibacter bethesdensis (strain ATCC BAA-1260 / CGDNIH1).